We begin with the raw amino-acid sequence, 218 residues long: UPF0502 protein Mmwyl1_3509 (218 aa).

Belongs to the UPF0502 family.

This chain is UPF0502 protein Mmwyl1_3509, found in Marinomonas sp. (strain MWYL1).